The following is a 133-amino-acid chain: Sec-independent protein translocase protein TatB (133 aa).

A helical transmembrane segment spans residues 1 to 21 (MFDIGFWELVLIAIVALVVLG). Residues 67-133 (EQMGMQNLSP…ASQPAEKKAE (67 aa)) form a disordered region. The segment covering 70–84 (GMQNLSPELQKSVES) has biased composition (polar residues). The segment covering 97 to 116 (AATPSSEASSTSSNPSSATE) has biased composition (low complexity).

This sequence belongs to the TatB family. In terms of assembly, the Tat system comprises two distinct complexes: a TatABC complex, containing multiple copies of TatA, TatB and TatC subunits, and a separate TatA complex, containing only TatA subunits. Substrates initially bind to the TatABC complex, which probably triggers association of the separate TatA complex to form the active translocon.

The protein localises to the cell inner membrane. In terms of biological role, part of the twin-arginine translocation (Tat) system that transports large folded proteins containing a characteristic twin-arginine motif in their signal peptide across membranes. Together with TatC, TatB is part of a receptor directly interacting with Tat signal peptides. TatB may form an oligomeric binding site that transiently accommodates folded Tat precursor proteins before their translocation. This is Sec-independent protein translocase protein TatB from Vibrio cholerae serotype O1 (strain ATCC 39315 / El Tor Inaba N16961).